A 501-amino-acid polypeptide reads, in one-letter code: MSKGKRAPYTRPCDSCSFRKVKCDMKTPCSRCVLNNLKCTNNRIRKKCGPKKIRDRTREAINNLSNKEDPKTNSFIPHFQLDKLQPCLETYQTWYYGIWPVLSISDLNMKITKRDVSAYALACALSAAILNQIDFISNNGTYCIPEDVKKLDFIGECIRARTFMNYQMTPTLETILTSFFLHVAEVNKGSKPAAIIYLREAITMAQIIGLHNESTYKSKPVAEAHRMRKIYFMLMVTERFMCIDDLIPVVLENSIKEFSLDDEQYSVLIDGFKELVKVFSIPSKAIFDRFIQMNDSISMPPETAGLLNKIQLELESICISPVAPDIQKANIIVSKYWMKALTWKITRKNNLLDDFVTTLCVKYPIELSEQFLGEIKSIPLRAFESNGPGVVFKLLSIATVLIDSINLSNDVSGYESLQRMFDLISKLKKTDMIIPRREYDRIKEALTKMEIDIFFSSAQSGGYISEVESNGSLDAFLTDPLVFYSGSNDNPTPSYIPDYQK.

Positions 13 to 39 form a DNA-binding region, zn(2)-C6 fungal-type; the sequence is CDSCSFRKVKCDMKTPCSRCVLNNLKC.

This sequence belongs to the MAL13 family.

Its subcellular location is the nucleus. Functionally, affects sucrose utilization and alpha-glucosidase activity. Probable transcriptional activator. In Candida albicans (strain SC5314 / ATCC MYA-2876) (Yeast), this protein is Probable sucrose utilization protein SUC1 (SUC1).